We begin with the raw amino-acid sequence, 133 residues long: MWLYTFAVALIVIAQEINGEPHTRPSSATPLNATLPPQEEGSAQNTTDAAVGSRLSTILRDLPTIKNISIFICVLTTLLITCLVIKICRSARKIRKTRKYDIITTPAERVEMAPLNEENDEEDDSTLFDVKYR.

An N-terminal signal peptide occupies residues 1 to 19 (MWLYTFAVALIVIAQEING). Residues 20-67 (EPHTRPSSATPLNATLPPQEEGSAQNTTDAAVGSRLSTILRDLPTIKN) are Extracellular-facing. The tract at residues 22–47 (HTRPSSATPLNATLPPQEEGSAQNTT) is disordered. N-linked (GlcNAc...) asparagine glycosylation is found at N32, N45, and N67. A helical membrane pass occupies residues 68–88 (ISIFICVLTTLLITCLVIKIC). Residues 89–133 (RSARKIRKTRKYDIITTPAERVEMAPLNEENDEEDDSTLFDVKYR) lie on the Cytoplasmic side of the membrane. Residues 113-133 (APLNEENDEEDDSTLFDVKYR) are disordered. Residues 117 to 126 (EENDEEDDST) are compositionally biased toward acidic residues.

The protein belongs to the FAM174 family.

Its subcellular location is the cell membrane. It localises to the golgi apparatus. Functionally, essential for Golgi structural integrity. This chain is Membrane protein FAM174B (Fam174b), found in Danio rerio (Zebrafish).